A 368-amino-acid polypeptide reads, in one-letter code: Probable deoxyhypusine synthase (368 aa).

Residues 100-104 (SNLVS), 126-128 (TAG), Glu-132, and Asp-233 contribute to the NAD(+) site. Position 131 to 132 (131 to 132 (EE)) interacts with spermidine. Residue Asp-238 participates in spermidine binding. Residue Gly-278 participates in NAD(+) binding. Spermidine is bound at residue His-283. 303-304 (TA) contacts NAD(+). Residues 309-311 (GSD) and 318-324 (EAISWGK) contribute to the spermidine site. Lys-324 (nucleophile) is an active-site residue. Residue 337–338 (EA) coordinates NAD(+).

The protein belongs to the deoxyhypusine synthase family. Requires NAD(+) as cofactor.

It catalyses the reaction [eIF5A protein]-L-lysine + spermidine = [eIF5A protein]-deoxyhypusine + propane-1,3-diamine. It participates in protein modification; eIF5A hypusination. Catalyzes the NAD-dependent oxidative cleavage of spermidine and the subsequent transfer of the butylamine moiety of spermidine to the epsilon-amino group of a specific lysine residue of the eIF-5A precursor protein to form the intermediate deoxyhypusine residue. In Drosophila melanogaster (Fruit fly), this protein is Probable deoxyhypusine synthase.